The primary structure comprises 463 residues: MNHLTTLDAGFLKAEDVDRHVSLAIGALAVIEGPAPDQEAFLSSLAQRLRPCTRFGQRLRLRPFDLGAPKWVDDPDFDLGRHVWRIALPRPGNEDQLFELIADLMARRLDRGRPLWEVWVIEGLADSKWAILTKLHHCMADGIAATHLLAGLSDESMSDSFASNIHTTMQSQSASVRRGGFRVNPSEALTASTAVMAGIVRAAKGASEIAAGVLSPAASSLNGPISDLRRYSAAKVPLADVEQVCRKFDVTINDVALAAITESYRNVFIQRGERPRFDSLRTLVPVSTRSNSALSKTDNRVSLMLPNLPVDQENPLQRLRIVHSRLTRAKAGGQRQFGNTLMAIANRLPFPMTAWAVGLLMRLPQRGVVTVATNVPGPRRPLQIMGRRVLDLYPVSPIAMQLRTSVAMLSYADDLYFGILADYDVVADAGQLARGIEDAVARLVAISKRRKVTRRRGALSLVV.

H137 serves as the catalytic Proton acceptor.

This sequence belongs to the long-chain O-acyltransferase family.

The catalysed reaction is an acyl-CoA + a 1,2-diacyl-sn-glycerol = a triacyl-sn-glycerol + CoA. Its pathway is glycerolipid metabolism; triacylglycerol biosynthesis. Catalyzes the terminal and only committed step in triacylglycerol synthesis by using diacylglycerol and fatty acyl CoA as substrates. Required for storage lipid synthesis. The sequence is that of Probable diacyglycerol O-acyltransferase tgs1 (tgs1) from Mycobacterium tuberculosis (strain CDC 1551 / Oshkosh).